Consider the following 389-residue polypeptide: Acetoin utilization protein AcuC (389 aa).

Belongs to the histone deacetylase family.

The protein operates within ketone degradation; acetoin degradation. Role in growth on acetoin or butanediol. Involved in the breakdown of these compounds used as a carbon source. The protein is Acetoin utilization protein AcuC (acuC) of Staphylococcus aureus (strain COL).